Consider the following 291-residue polypeptide: Putative transport permease ycf38 (291 aa).

The next 6 helical transmembrane spans lie at 47-67 (ATLM…GGLF), 87-107 (SGII…PLMF), 135-155 (FMTC…LFMG), 165-185 (LIFA…SLAL), 195-215 (LLAL…ALAP), and 262-282 (ISLG…AYIV). The 243-residue stretch at 47–289 (ATLMAGIIQP…YIVSNILKAR (243 aa)) folds into the ABC transmembrane type-2 domain.

This sequence belongs to the ABC-2 integral membrane protein family.

The protein localises to the plastid. It is found in the chloroplast membrane. This Porphyra purpurea (Red seaweed) protein is Putative transport permease ycf38 (ycf38).